We begin with the raw amino-acid sequence, 312 residues long: DnaJ homolog subfamily B member 7 (312 aa).

The J domain maps to 3 to 69; that stretch reads DYYEVLGVQR…EKRDIYDKYG (67 aa). Residues 272 to 312 are disordered; sequence SWVTNKKEPSIFSAGFKEGGRRKKKKHKEGQKKKKSNKRNH. Over residues 291-312 the composition is skewed to basic residues; it reads GRRKKKKHKEGQKKKKSNKRNH.

In terms of biological role, probably acts as a co-chaperone. The polypeptide is DnaJ homolog subfamily B member 7 (Dnajb7) (Mus musculus (Mouse)).